A 984-amino-acid chain; its full sequence is Ephrin type-B receptor 1 (984 aa).

The N-terminal stretch at 1–17 (MALDYLLLLLLASAVAA) is a signal peptide. The Extracellular segment spans residues 18-540 (MEETLMDTRT…YKSELREQLP (523 aa)). Residues 19 to 201 (EETLMDTRTA…FFKKCPSIVQ (183 aa)) enclose the Eph LBD domain. Fibronectin type-III domains are found at residues 322 to 432 (VPSG…TNQA) and 433 to 528 (APST…TLTD). Asparagine 334, asparagine 426, and asparagine 480 each carry an N-linked (GlcNAc...) asparagine glycan. The helical transmembrane segment at 541-563 (LIAGSAAAGVVFVVSLVAISIVC) threads the bilayer. Over 564-984 (SRKRAYSKEA…QISQSPTAMA (421 aa)) the chain is Cytoplasmic. A Phosphotyrosine modification is found at tyrosine 600. The Protein kinase domain maps to 619 to 882 (VKIEEVIGAG…EIVNTLDKMI (264 aa)). Residues 625 to 633 (IGAGEFGEV) and lysine 651 contribute to the ATP site. Catalysis depends on aspartate 744, which acts as the Proton acceptor. In terms of domain architecture, SAM spans 911–975 (TAFTTVDDWL…LNSIHSMRVQ (65 aa)). Tyrosine 928 carries the phosphotyrosine; by autocatalysis modification. Residues 982–984 (AMA) carry the PDZ-binding motif.

Belongs to the protein kinase superfamily. Tyr protein kinase family. Ephrin receptor subfamily. In terms of assembly, heterotetramer upon binding of the ligand. The heterotetramer is composed of an ephrin dimer and a receptor dimer. Oligomerization is probably required to induce biological responses. Interacts with EPHB6; transphosphorylates EPHB6 to form an active signaling complex. Interacts with PICK1. Interacts (through Tyr-594) with NCK1 (via SH2 domain); activates the JUN cascade to regulate cell adhesion. The ligand-activated form interacts (through Tyr-928) with GRB7 and GRB10 (via SH2 domains). The ligand-activated form interacts (residues within the catalytic domain) with GRB2 (via SH2 domain). Interacts with GRB2, SHC1 and SRC; activates the MAPK/ERK cascade to regulate cell migration. Interacts with CBL; regulates receptor degradation through ubiquitination. Interacts with ACP1. In terms of processing, phosphorylated. Autophosphorylation is stimulated by the ligand EFNB1. Required for interaction with SH2 domain-containing interactors, for activation of the MAPK/ERK and JUN signaling cascades and for ubiquitination by CBL. Ubiquitinated; (EFNB1)ligand-induced poly- and/or multi-ubiquitination by CBL is regulated by SRC and leads to lysosomal degradation. Preferentially expressed in brain.

Its subcellular location is the cell membrane. The protein localises to the early endosome membrane. It is found in the cell projection. It localises to the dendrite. It catalyses the reaction L-tyrosyl-[protein] + ATP = O-phospho-L-tyrosyl-[protein] + ADP + H(+). Functionally, receptor tyrosine kinase which binds promiscuously transmembrane ephrin-B family ligands residing on adjacent cells, leading to contact-dependent bidirectional signaling into neighboring cells. The signaling pathway downstream of the receptor is referred to as forward signaling while the signaling pathway downstream of the ephrin ligand is referred to as reverse signaling. Cognate/functional ephrin ligands for this receptor include EFNB1, EFNB2 and EFNB3. During nervous system development, regulates retinal axon guidance redirecting ipsilaterally ventrotemporal retinal ganglion cells axons at the optic chiasm midline. This probably requires repulsive interaction with EFNB2. In the adult nervous system together with EFNB3, regulates chemotaxis, proliferation and polarity of the hippocampus neural progenitors. In addition to its role in axon guidance also plays an important redundant role with other ephrin-B receptors in development and maturation of dendritic spines and synapse formation. May also regulate angiogenesis. More generally, may play a role in targeted cell migration and adhesion. Upon activation by EFNB1 and probably other ephrin-B ligands activates the MAPK/ERK and the JNK signaling cascades to regulate cell migration and adhesion respectively. Involved in the maintenance of the pool of satellite cells (muscle stem cells) by promoting their self-renewal and reducing their activation and differentiation. The protein is Ephrin type-B receptor 1 (EPHB1) of Homo sapiens (Human).